The primary structure comprises 435 residues: Putative magnesium transporter MRS2-H (435 aa).

Residues 19 to 54 are disordered; the sequence is FSSSPESRRCRSVHRVPSRPRPPLAPPARVMGKGNS. Transmembrane regions (helical) follow at residues 369 to 389 and 408 to 428; these read LTLI…AAFA and FVGA…TYAW.

The protein belongs to the CorA metal ion transporter (MIT) (TC 1.A.35.5) family.

Its subcellular location is the membrane. Putative magnesium transporter. The protein is Putative magnesium transporter MRS2-H (MRS2-H) of Oryza sativa subsp. indica (Rice).